Here is a 107-residue protein sequence, read N- to C-terminus: Cysteine proteinase inhibitor (107 aa).

The Cystatin domain maps to 18-107; that stretch reads GGVQDAPAGR…KQLQEFKPAA (90 aa). The short motif at 63–67 is the Secondary area of contact element; sequence QVVAG.

The protein belongs to the cystatin family. Phytocystatin subfamily. In terms of tissue distribution, expressed in embryos, developing endosperms, leaves, roots, flowers and pollen grains.

Inhibits papain, ficin, cathepsin B and, to a lesser extent, chymopapain, but is inactive against bromelain. Inhibits the growth of pathogenic fungi. Regulated by the DOF transcription factors SAD (activator) and BPBF (repressor). This Hordeum vulgare (Barley) protein is Cysteine proteinase inhibitor (ICY).